The following is a 244-amino-acid chain: Adenosine 5'-phosphosulfate reductase (244 aa).

Positions 129, 130, 212, and 215 each coordinate [4Fe-4S] cluster. The active-site Nucleophile; cysteine thiosulfonate intermediate is the C240.

The protein belongs to the PAPS reductase family. CysH subfamily. [4Fe-4S] cluster serves as cofactor.

It is found in the cytoplasm. It catalyses the reaction [thioredoxin]-disulfide + sulfite + AMP + 2 H(+) = adenosine 5'-phosphosulfate + [thioredoxin]-dithiol. Its pathway is sulfur metabolism; hydrogen sulfide biosynthesis; sulfite from sulfate. Catalyzes the formation of sulfite from adenosine 5'-phosphosulfate (APS) using thioredoxin as an electron donor. In Neisseria meningitidis serogroup A / serotype 4A (strain DSM 15465 / Z2491), this protein is Adenosine 5'-phosphosulfate reductase.